We begin with the raw amino-acid sequence, 214 residues long: MSSITLALSKGRIFEETLPLLAAAGITPTDNPESSRKLIIGTNRPEVRLVIVRATDTPTYVQYGAADLGIAGKDVLIEHGGAGLYQPLDLNIARCRLCVAVRKGFDYAAATRPGGRIRVATKYINSAKAHFAGKGMHVDLIKLYGSMELAPLVGLADAIVDLVSTGSTLRANNLEEVEDIAPISSRLIVNQASLKLKRELIQPVLDAFAGAIKP.

It belongs to the ATP phosphoribosyltransferase family. Short subfamily. As to quaternary structure, heteromultimer composed of HisG and HisZ subunits.

Its subcellular location is the cytoplasm. The enzyme catalyses 1-(5-phospho-beta-D-ribosyl)-ATP + diphosphate = 5-phospho-alpha-D-ribose 1-diphosphate + ATP. It functions in the pathway amino-acid biosynthesis; L-histidine biosynthesis; L-histidine from 5-phospho-alpha-D-ribose 1-diphosphate: step 1/9. In terms of biological role, catalyzes the condensation of ATP and 5-phosphoribose 1-diphosphate to form N'-(5'-phosphoribosyl)-ATP (PR-ATP). Has a crucial role in the pathway because the rate of histidine biosynthesis seems to be controlled primarily by regulation of HisG enzymatic activity. This is ATP phosphoribosyltransferase from Azoarcus sp. (strain BH72).